The chain runs to 86 residues: Kappa-theraphotoxin-Cg1c (86 aa).

Residues 1 to 21 (MKVSVLITLAVLGVMFVWASA) form the signal peptide. A propeptide spanning residues 22 to 50 (AELEERGSDHRDSPAWLKSMERIFQSEER) is cleaved from the precursor. 3 disulfide bridges follow: cysteine 52–cysteine 66, cysteine 59–cysteine 71, and cysteine 65–cysteine 78.

It belongs to the neurotoxin 10 (Hwtx-1) family. 28 (Jztx-11) subfamily. As to expression, expressed by the venom gland.

It localises to the secreted. Functionally, probable ion channel inhibitor. This is Kappa-theraphotoxin-Cg1c from Chilobrachys guangxiensis (Chinese earth tiger tarantula).